We begin with the raw amino-acid sequence, 73 residues long: Ocellatin-PT8 (73 aa).

The N-terminal stretch at 1–22 (MAFLKKSLFLVLFLGLVSLSIC) is a signal peptide. Residues 23-39 (DEEKRQDEDDDDDDDEE) constitute a propeptide that is removed on maturation.

In terms of tissue distribution, expressed by the skin glands.

It is found in the secreted. Has antibacterial activity against Gram-negative bacteria E.coli ATCC 25922 (MIC=60 uM), K.pneumoniae ATCC 700603 (MIC=240 uM) and S.choleraesuis ATCC 14028 (MIC=240 uM) and against Gram-positive bacterium S.aureus ATCC 29313 (MIC=240 uM). Shows no hemolytic activity and no cytotoxicity. This Leptodactylus pustulatus (Ceara white-lipped frog) protein is Ocellatin-PT8.